A 491-amino-acid polypeptide reads, in one-letter code: Ketol-acid reductoisomerase (NADP(+)) (491 aa).

In terms of domain architecture, KARI N-terminal Rossmann spans 15 to 208 (AQLGKCRFMG…GGHRAGVLES (194 aa)). NADP(+) is bound by residues 45–48 (CGAQ), Arg68, Arg76, Ser78, and 108–110 (DKQ). The active site involves His132. Gly158 lines the NADP(+) pocket. KARI C-terminal knotted domains follow at residues 209–344 (SFVA…TAPQ) and 345–484 (FEGK…MTDM). Mg(2+) contacts are provided by Asp217, Glu221, Glu389, and Glu393. A substrate-binding site is contributed by Ser414.

It belongs to the ketol-acid reductoisomerase family. It depends on Mg(2+) as a cofactor.

It catalyses the reaction (2R)-2,3-dihydroxy-3-methylbutanoate + NADP(+) = (2S)-2-acetolactate + NADPH + H(+). The catalysed reaction is (2R,3R)-2,3-dihydroxy-3-methylpentanoate + NADP(+) = (S)-2-ethyl-2-hydroxy-3-oxobutanoate + NADPH + H(+). It participates in amino-acid biosynthesis; L-isoleucine biosynthesis; L-isoleucine from 2-oxobutanoate: step 2/4. The protein operates within amino-acid biosynthesis; L-valine biosynthesis; L-valine from pyruvate: step 2/4. Functionally, involved in the biosynthesis of branched-chain amino acids (BCAA). Catalyzes an alkyl-migration followed by a ketol-acid reduction of (S)-2-acetolactate (S2AL) to yield (R)-2,3-dihydroxy-isovalerate. In the isomerase reaction, S2AL is rearranged via a Mg-dependent methyl migration to produce 3-hydroxy-3-methyl-2-ketobutyrate (HMKB). In the reductase reaction, this 2-ketoacid undergoes a metal-dependent reduction by NADPH to yield (R)-2,3-dihydroxy-isovalerate. The sequence is that of Ketol-acid reductoisomerase (NADP(+)) from Salmonella schwarzengrund (strain CVM19633).